We begin with the raw amino-acid sequence, 730 residues long: LisH domain-containing protein ARMC9 (730 aa).

The 33-residue stretch at 7 to 39 folds into the LisH domain; it reads HESELLGLVKEYLDFAEFEDTLKTFSKECKVKG. Positions 205-242 form a coiled coil; sequence SNNKEMLQQLHQQLLEAERRAMAYLKRYNKMQADYHSL. Ser-583 carries the post-translational modification Phosphoserine. Residues 675-730 are disordered; the sequence is QNAQQARNGCPRPIPVAQPDDYKEGKRGVAGRATPSSCKSAECAEPVLSSGAQKPK.

Interacts with TOGARAM1, CCDC66, CEP104, CSPP1 and CEP290. Interacts with NDUFAF2.

The protein resides in the cytoplasm. Its subcellular location is the cytoskeleton. It is found in the cilium basal body. The protein localises to the cell projection. It localises to the cilium. The protein resides in the microtubule organizing center. Its subcellular location is the centrosome. It is found in the centriole. Its function is as follows. Involved in ciliogenesis. It is required for appropriate acetylation and polyglutamylation of ciliary microtubules, and regulation of cilium length. Acts as a positive regulator of hedgehog (Hh)signaling. May participate in the trafficking and/or retention of GLI2 and GLI3 proteins at the ciliary tip. The sequence is that of LisH domain-containing protein ARMC9 (Armc9) from Rattus norvegicus (Rat).